Consider the following 912-residue polypeptide: Intercellular adhesion molecule 5 (912 aa).

Residues 1–29 (MPGPSPGLRALLGFWVALGLGILRLSAVA) form the signal peptide. Over 30–826 (QEPFWADLQP…RITVRVAGPW (797 aa)) the chain is Extracellular. Ig-like C2-type domains lie at 47–127 (GGSL…PLPP), 132–232 (GENF…RLLA), 239–324 (DSQS…LLTL), 332–395 (GKLV…NGSA), 403–481 (PRLD…VTLT), 486–561 (PALD…VAVT), 566–645 (PSFE…NPLG), 659–734 (PQMD…TVGV), and 738–819 (PVVA…RRIT). A glycan (N-linked (GlcNAc...) (high mannose) asparagine) is linked at Asn53. 2 disulfides stabilise this stretch: Cys54-Cys97 and Cys58-Cys101. Residue Asn134 is glycosylated (N-linked (GlcNAc...) asparagine). Cys139 and Cys195 are disulfide-bonded. Thr179 and Thr181 each carry phosphothreonine. Residues Asn192 and Asn211 are each glycosylated (N-linked (GlcNAc...) asparagine). Cys246 and Cys297 are disulfide-bonded. N-linked (GlcNAc...) asparagine glycosylation is found at Asn311, Asn366, and Asn392. Cysteines 339 and 378 form a disulfide. Cystine bridges form between Cys410/Cys465, Cys493/Cys546, and Cys573/Cys638. N-linked (GlcNAc...) asparagine glycans are attached at residues Asn576 and Asn639. Cys666 and Cys717 are oxidised to a cystine. A disordered region spans residues 678–708 (AAGPACARGRPSPRVRCSREGAPRPARPRVS). Residues Asn756, Asn787, and Asn788 are each glycosylated (N-linked (GlcNAc...) asparagine). Cys761 and Cys806 are disulfide-bonded. A helical membrane pass occupies residues 827 to 847 (LWIAVGGAVGGAVLLAAGAGL). Residues 848-912 (AFYVQSTACK…EVFAIQLTSA (65 aa)) are Cytoplasmic-facing. Residues 880 to 902 (GGAGSGAEGGPEAEDSAESPAGG) form a disordered region.

The protein belongs to the immunoglobulin superfamily. ICAM family. Glycosylation at Asn-53 is critical for functional folding. Expressed on neurons in the most rostral segment of the mammalian brain, the telencephalon.

It localises to the membrane. Functionally, ICAM proteins are ligands for the leukocyte adhesion protein LFA-1 (integrin alpha-L/beta-2). The chain is Intercellular adhesion molecule 5 (ICAM5) from Oryctolagus cuniculus (Rabbit).